The chain runs to 171 residues: Adenine phosphoribosyltransferase (171 aa).

The protein belongs to the purine/pyrimidine phosphoribosyltransferase family. In terms of assembly, homodimer.

Its subcellular location is the cytoplasm. The catalysed reaction is AMP + diphosphate = 5-phospho-alpha-D-ribose 1-diphosphate + adenine. The protein operates within purine metabolism; AMP biosynthesis via salvage pathway; AMP from adenine: step 1/1. Catalyzes a salvage reaction resulting in the formation of AMP, that is energically less costly than de novo synthesis. The polypeptide is Adenine phosphoribosyltransferase (Prochlorococcus marinus (strain MIT 9515)).